We begin with the raw amino-acid sequence, 195 residues long: Imidazoleglycerol-phosphate dehydratase (195 aa).

It belongs to the imidazoleglycerol-phosphate dehydratase family.

The protein localises to the cytoplasm. It catalyses the reaction D-erythro-1-(imidazol-4-yl)glycerol 3-phosphate = 3-(imidazol-4-yl)-2-oxopropyl phosphate + H2O. It participates in amino-acid biosynthesis; L-histidine biosynthesis; L-histidine from 5-phospho-alpha-D-ribose 1-diphosphate: step 6/9. The polypeptide is Imidazoleglycerol-phosphate dehydratase (Geobacillus sp. (strain WCH70)).